We begin with the raw amino-acid sequence, 149 residues long: Aquaporin-like protein 2 (149 aa).

The segment at 1–35 is disordered; the sequence is MSNESNDLEKNISHLDPTGVDNAYIPPEQPETKHS. Topologically, residues 1–47 are cytoplasmic; the sequence is MSNESNDLEKNISHLDPTGVDNAYIPPEQPETKHSRFNIDRGTLRNH. Residues 48–68 traverse the membrane as a helical segment; sequence FIAAVGEFCGTFMFLWCAYVI. Over 69-89 the chain is Extracellular; that stretch reads CNVANHDVALTTEPEGSHPGQ. The helical transmembrane segment at 90–110 threads the bilayer; the sequence is LIMIALGFGFSVMFSIWCFWW. At 111 to 149 the chain is on the cytoplasmic side; it reads GFEPSRFSLFVFGQSHLTSQMCSDVVSSDHCWDGCWWCR.

The protein belongs to the MIP/aquaporin (TC 1.A.8) family.

It localises to the endoplasmic reticulum membrane. The protein resides in the cell membrane. Functionally, water channel required to facilitate the transport of water across membranes. Involved in freeze tolerance, osmotolerance and cell flocculation in liquid cultures. Is non-functional in most laboratory strains. This chain is Aquaporin-like protein 2 (AQY2-2), found in Saccharomyces cerevisiae (strain Lalvin EC1118 / Prise de mousse) (Baker's yeast).